Here is a 115-residue protein sequence, read N- to C-terminus: Phosphoribosyl-AMP cyclohydrolase (115 aa).

Asp80 is a binding site for Mg(2+). Residue Cys81 participates in Zn(2+) binding. Positions 82 and 84 each coordinate Mg(2+). Cys97 and Cys104 together coordinate Zn(2+).

Belongs to the PRA-CH family. In terms of assembly, homodimer. It depends on Mg(2+) as a cofactor. Requires Zn(2+) as cofactor.

It is found in the cytoplasm. It catalyses the reaction 1-(5-phospho-beta-D-ribosyl)-5'-AMP + H2O = 1-(5-phospho-beta-D-ribosyl)-5-[(5-phospho-beta-D-ribosylamino)methylideneamino]imidazole-4-carboxamide. It functions in the pathway amino-acid biosynthesis; L-histidine biosynthesis; L-histidine from 5-phospho-alpha-D-ribose 1-diphosphate: step 3/9. In terms of biological role, catalyzes the hydrolysis of the adenine ring of phosphoribosyl-AMP. This chain is Phosphoribosyl-AMP cyclohydrolase, found in Mycobacterium sp. (strain MCS).